We begin with the raw amino-acid sequence, 150 residues long: Large ribosomal subunit protein bL9 (150 aa).

Belongs to the bacterial ribosomal protein bL9 family.

Its function is as follows. Binds to the 23S rRNA. The chain is Large ribosomal subunit protein bL9 from Burkholderia multivorans (strain ATCC 17616 / 249).